Reading from the N-terminus, the 119-residue chain is DNA-binding protein Maeo_0998 (119 aa).

Residues 1–11 (MDIEEIKRQKM) are compositionally biased toward basic and acidic residues. The tract at residues 1 to 36 (MDIEEIKRQKMMELQQQQAQGAPNPEEIQQQQEQER) is disordered. Residues 15-32 (QQQQAQGAPNPEEIQQQQ) show a composition bias toward low complexity.

It belongs to the PDCD5 family.

The chain is DNA-binding protein Maeo_0998 from Methanococcus aeolicus (strain ATCC BAA-1280 / DSM 17508 / OCM 812 / Nankai-3).